A 250-amino-acid chain; its full sequence is Undecaprenyl-diphosphatase (250 aa).

7 helical membrane passes run 35–55 (DLSV…IFVG), 73–93 (INLT…GVLL), 100–120 (SLSN…ALLI), 146–166 (ALAI…SLLI), 171–191 (EIAL…AGLL), 200–220 (SYSI…LFIL), and 229–249 (LKIF…LGGI).

Belongs to the UppP family.

It is found in the cell inner membrane. It carries out the reaction di-trans,octa-cis-undecaprenyl diphosphate + H2O = di-trans,octa-cis-undecaprenyl phosphate + phosphate + H(+). In terms of biological role, catalyzes the dephosphorylation of undecaprenyl diphosphate (UPP). Confers resistance to bacitracin. The polypeptide is Undecaprenyl-diphosphatase (Thermosipho melanesiensis (strain DSM 12029 / CIP 104789 / BI429)).